The chain runs to 165 residues: IQSTSMDQGSLSEDSMNSFIRTLIQAGIWKNKVPKQAARTKDGMQTTVKEAEAEPGAVANRGVRLGSQPVVSVDTELLRQQRRFSSPRVLLSENAPLEPPPLYLMEEPMVLNQTSRRKRFAEGKSHRGEYSVCDSESRWVTDKSSAVDIRGHQVTVLGEIRMGSS.

Positions 1–3 (IQS) are cleaved as a signal peptide. A propeptide spanning residues 4 to 119 (TSMDQGSLSE…VLNQTSRRKR (116 aa)) is cleaved from the precursor. Asparagine 112 is a glycosylation site (N-linked (GlcNAc...) asparagine).

This sequence belongs to the NGF-beta family.

Its subcellular location is the secreted. Functionally, seems to promote the survival of visceral and proprioceptive sensory neurons. The chain is Neurotrophin-3 (NTF3) from Aspidites melanocephalus (Black-headed python).